We begin with the raw amino-acid sequence, 659 residues long: MLIFETYLILFKTVQITKRRIERRRLRLLNQCFTKKEGVSNREMASYNYVEVLQKSMLFYEAQRSGRLPESNRLNWRGDSGLKDGKDVGHDLTGGWYDAGDHVKFGLPMAYSAAVLAWTVYEYREAYEEAELLDEILDQIKWATDYFLKAHTGPNEFWAQVGDGNADHAWWGPAEVMPMNRPAFKIDEHCPGTEVAAQTAAALAAGSIIFKETDASYAAKLLTHAKQLYAFADRYRGKYTDCVTNAQPFYNSWSGYVDELIWGGIWLYLATNEETYLNKALKAVEEWPQDWDYTFTMSWDNTFFASQILLARITKENRFIESTERNLDYWTTGLVQNGKVERITYTPGGLAWLDQWGSLRYAANAAFLAFVYADWVSDQEKKNRYQSFAIKQTHYMLGDNPLNRSYVVGFGQNSPKHPHHRTAHGSWSNQLTNPPSHRHTLYGALVGGPNAQDQYDDDISDYISNEVATDYNAAFTGNIAKMVQLFGEGQSKLPNFPPKEQVEDEFFVEAAVMHNDTTSTQVKAVLYNRSGWPARSSQTLSFRYYVNLSEVFAKGFTEKDIQVTAAYNEGASLSPLKVYDASSRVYFAEIDFTGVVISPRGESEHKKEIQFRLSAPNGSNIWDASNDYSYQGLTSNMQKTTKIPVFEDGVLVFGTLPDK.

Positions 1–500 are catalytic; that stretch reads MLIFETYLIL…SKLPNFPPKE (500 aa). The Nucleophile role is filled by Asp-101. The tract at residues 413-433 is disordered; that stretch reads NSPKHPHHRTAHGSWSNQLTN. Residues His-419, Asp-457, and Glu-466 contribute to the active site. The CBM3 domain maps to 501–658; that stretch reads QVEDEFFVEA…GVLVFGTLPD (158 aa).

This sequence belongs to the glycosyl hydrolase 9 (cellulase E) family.

Its subcellular location is the secreted. It catalyses the reaction Endohydrolysis of (1-&gt;4)-beta-D-glucosidic linkages in cellulose, lichenin and cereal beta-D-glucans.. Strongly inhibited by ZnCl(2) and by EDTA. Functionally, active on carboxymethyl cellulose and carboxymethyl cellulose-RBB but not avicel, xanthan gum, carboxymethyl-curdulan-RBB or carboxymethyl-xylan-RBB. The polypeptide is Endoglucanase A (eglA) (Bacillus pumilus (Bacillus mesentericus)).